A 325-amino-acid polypeptide reads, in one-letter code: Syntaxin-16 (325 aa).

Residues 1–301 are Cytoplasmic-facing; sequence MATRRLTDAF…AEQYQKKNRK (301 aa). The residue at position 41 (Ser41) is a Phosphoserine. The t-SNARE coiled-coil homology domain occupies 230 to 292; it reads TLMVEERERE…EDGLKQLHKA (63 aa). A helical; Anchor for type IV membrane protein transmembrane segment spans residues 302–322; that stretch reads MLVILILFVIIIVLIVVLVGV. The Vesicular segment spans residues 323–325; sequence KSR.

This sequence belongs to the syntaxin family. Interacts with GCC2. Interacts with BAIAP3; this interaction is increased in the presence of calcium. As to expression, ubiquitous.

The protein localises to the golgi apparatus membrane. Its subcellular location is the cytoplasm. SNARE involved in vesicular transport from the late endosomes to the trans-Golgi network. The polypeptide is Syntaxin-16 (STX16) (Homo sapiens (Human)).